Reading from the N-terminus, the 194-residue chain is Calcium channel flower (194 aa).

3 helical membrane passes run 34–54 (LLGI…VFSI), 59–79 (VSCL…MLLE), and 107–127 (GLYI…ASLF).

Belongs to the calcium channel flower family. As to quaternary structure, homomultimer. Associates with the dally/ magu complex.

Its subcellular location is the cell membrane. It is found in the cytoplasmic vesicle. It localises to the secretory vesicle. The protein resides in the synaptic vesicle membrane. The protein localises to the presynaptic cell membrane. Its subcellular location is the endosome. With respect to regulation, channel activity is inhibited by La(3+), which reduces Ca(2+) influx and thus inhibits it's function in promoting activity-dependent bulk endocytosis (ADBE) in response to high stimuli. In terms of biological role, transmembrane protein which mediates synaptic endocytosis, fitness-based cell culling, neuronal culling, morphogen gradient scaling, and calcium transport. Regulates synaptic endocytosis and hence couples exo- with endocytosis. Controls two major modes of synaptic vesicle (SV) endocytosis in the synaptic boutons of neuromuscular junctions (NMJs); Ca(2+) channel-independent Clathrin-mediated endocytosis (CME) in response to mild stimulation, and Ca(2+) channel-dependent activity-dependent bulk endocytosis (ADBE) in response to strong stimulation. Functions in ADBE and subsequent SV reformation from bulk endosomes by initiating Ca(2+) channel-dependent phosphatidylinositol 4,5-bisphosphate (PtdIns(4,5)P2) compartmentalization in synaptic boutons. There it acts at the periactive zone to provide the low Ca(2+) levels required to initiate Calcineurin activation and upregulate PtdIns(4,5)P2. Conversely PtdIns(4,5)P2 enhances fwe Ca(2+) channel-activity, establishing a positive feedback loop that induces PtdIns(4,5)P2 microdomain at the periactive zone. These microdomains trigger bulk membrane invagination (i.e. ADBE) by triggering actin polymerization while also promoting localization of fwe to bulk endosomes, thereby removing the ADBE trigger to reduce endocytosis and prevent excess membrane uptake. PtdIns(4,5)P2 then promotes SV reformation from the bulk endosomes, to coordinate ADBE and subsequent SV reformation. Different combinations of the flower isoforms at the cell membrane are also required for the identification and elimination of suboptimal or supernumerary cells during development, regeneration, and adulthood. Required for the recognition and elimination of unfit cells in the developing wing during cell competition. In the developing pupal retina, mediates the elimination of unwanted postmitotic neurons, including supernumerary photoreceptor neurons that form at the periphery of the retina and are contained within incomplete ommatidia units. Also required for efficient elimination and replacement of old neurons by newly generated neurons during regeneration in the adult brain following mechanical injury. Downstream of the flower fitness fingerprints, cells identified as unwanted or unfit are eliminated via apoptosis through the expression of ahuizotl (azot). However, the cells marked for elimination by the flower isoforms only undergo apoptosis if additional thresholds are met; (1) their neighboring fit/healthy cells express different levels of the fwe isoforms, and (2) the levels of the protective signal SPARC expressed by the loser or unwanted cells are unable to inhibit caspase activation. These additional thresholds for flower-mediated apoptosis, allows useful cells to recover from transient and limited stress before they are unnecessarily eliminated. Functions with dally and magu in a mechanism of scaling, which utilises apoptosis to ensure that the dpp morphogen gradient, which mediates organ growth, remains proportional to the size of the growing wing. In this mechanism, fwe represses dally- and Magu-dependent activity in expanding the gradient, and dally/Magu inhibits fwe-dependent apoptosis to keep cell death rate low. When the levels of these different proteins are optimally regulated the gradient correctly scales with organ growth but when this fails, fwe-mediated apoptosis is activated to trim the developing tissue to match the correct size of the gradient. The polypeptide is Calcium channel flower (Drosophila erecta (Fruit fly)).